Consider the following 387-residue polypeptide: 1-deoxy-D-xylulose 5-phosphate reductoisomerase (387 aa).

NADPH-binding residues include Thr-10, Gly-11, Ser-12, Ile-13, and Asn-124. A 1-deoxy-D-xylulose 5-phosphate-binding site is contributed by Lys-125. Residue Glu-126 coordinates NADPH. Asp-150 provides a ligand contact to Mn(2+). Positions 151, 152, 176, and 199 each coordinate 1-deoxy-D-xylulose 5-phosphate. A Mn(2+)-binding site is contributed by Glu-152. Gly-205 provides a ligand contact to NADPH. 1-deoxy-D-xylulose 5-phosphate-binding residues include Ser-212, Asn-217, Lys-218, and Glu-221. Glu-221 serves as a coordination point for Mn(2+).

The protein belongs to the DXR family. The cofactor is Mg(2+). Mn(2+) serves as cofactor.

It catalyses the reaction 2-C-methyl-D-erythritol 4-phosphate + NADP(+) = 1-deoxy-D-xylulose 5-phosphate + NADPH + H(+). The protein operates within isoprenoid biosynthesis; isopentenyl diphosphate biosynthesis via DXP pathway; isopentenyl diphosphate from 1-deoxy-D-xylulose 5-phosphate: step 1/6. Functionally, catalyzes the NADPH-dependent rearrangement and reduction of 1-deoxy-D-xylulose-5-phosphate (DXP) to 2-C-methyl-D-erythritol 4-phosphate (MEP). The polypeptide is 1-deoxy-D-xylulose 5-phosphate reductoisomerase (Clostridium beijerinckii (strain ATCC 51743 / NCIMB 8052) (Clostridium acetobutylicum)).